The sequence spans 381 residues: uncharacterized protein (381 aa).

Residues 331–340 (MQNGYANNGR) are compositionally biased toward polar residues. The disordered stretch occupies residues 331-381 (MQNGYANNGRNHQRERFERPEKNSKKNKFLPFNGSNKEKKRDKLKKNCVIM). Basic and acidic residues predominate over residues 342 to 354 (HQRERFERPEKNS). Basic residues predominate over residues 372–381 (DKLKKNCVIM).

It is found in the cytoplasm. It localises to the nucleus. This is an uncharacterized protein from Saccharomyces cerevisiae (strain ATCC 204508 / S288c) (Baker's yeast).